The sequence spans 335 residues: Dihydroorotate dehydrogenase (quinone) (335 aa).

FMN is bound by residues 59–63 (AGLDK) and Thr-83. Position 63 (Lys-63) interacts with substrate. 108–112 (NRMGF) lines the substrate pocket. Residues Asn-136 and Asn-169 each contribute to the FMN site. A substrate-binding site is contributed by Asn-169. Ser-172 serves as the catalytic Nucleophile. Asn-174 serves as a coordination point for substrate. FMN-binding residues include Lys-214 and Thr-242. Residue 243 to 244 (NT) participates in substrate binding. FMN contacts are provided by residues Gly-265, Gly-294, and 315–316 (YS).

It belongs to the dihydroorotate dehydrogenase family. Type 2 subfamily. As to quaternary structure, monomer. FMN is required as a cofactor.

Its subcellular location is the cell membrane. It carries out the reaction (S)-dihydroorotate + a quinone = orotate + a quinol. It functions in the pathway pyrimidine metabolism; UMP biosynthesis via de novo pathway; orotate from (S)-dihydroorotate (quinone route): step 1/1. Catalyzes the conversion of dihydroorotate to orotate with quinone as electron acceptor. The sequence is that of Dihydroorotate dehydrogenase (quinone) from Neisseria gonorrhoeae (strain ATCC 700825 / FA 1090).